Here is a 339-residue protein sequence, read N- to C-terminus: Undifferentiated embryonic cell transcription factor 1 (339 aa).

Disordered stretches follow at residues 1 to 62 (MLLR…QRTP) and 144 to 270 (MGLL…QVAP). Residues Ser-15, Ser-18, Ser-48, and Ser-54 each carry the phosphoserine modification. Residues 154-170 (RVRRRSTGPGRPQRRGR) are compositionally biased toward basic residues. 2 stretches are compositionally biased toward low complexity: residues 171 to 193 (SSLSALAPAPAPVEQEAELPLAA) and 218 to 229 (TSSPPLTSTDTL). The segment covering 261 to 270 (GRASSPQVAP) has biased composition (polar residues). The tract at residues 279–310 (QTLTHLGDISTVLGPLRDQLSTLNQHVEHLRG) is leucine-zipper.

Binds to the N-terminal region of ATF2. Associates with the TFIID complex through interaction with TBP. Post-translationally, phosphorylated. As to expression, expressed mainly in pluripotent cells with expression rapidly down-regulated upon cell differentiation.

It localises to the nucleus. Its function is as follows. Acts as a transcriptional coactivator of ATF2. In Mus musculus (Mouse), this protein is Undifferentiated embryonic cell transcription factor 1.